The following is a 260-amino-acid chain: Hydroxyethylthiazole kinase 1 (260 aa).

Residue M39 participates in substrate binding. Positions 115 and 160 each coordinate ATP. G187 is a binding site for substrate.

This sequence belongs to the Thz kinase family. It depends on Mg(2+) as a cofactor.

The catalysed reaction is 5-(2-hydroxyethyl)-4-methylthiazole + ATP = 4-methyl-5-(2-phosphooxyethyl)-thiazole + ADP + H(+). It functions in the pathway cofactor biosynthesis; thiamine diphosphate biosynthesis; 4-methyl-5-(2-phosphoethyl)-thiazole from 5-(2-hydroxyethyl)-4-methylthiazole: step 1/1. Catalyzes the phosphorylation of the hydroxyl group of 4-methyl-5-beta-hydroxyethylthiazole (THZ). This is Hydroxyethylthiazole kinase 1 from Streptococcus pneumoniae (strain P1031).